The sequence spans 294 residues: Putative isocitrate dehydrogenase [NAD] subunit-like 4 (294 aa).

The protein belongs to the isocitrate and isopropylmalate dehydrogenases family.

In terms of biological role, performs an essential role in the oxidative function of the citric acid cycle. The sequence is that of Putative isocitrate dehydrogenase [NAD] subunit-like 4 (IDH4) from Arabidopsis thaliana (Mouse-ear cress).